Consider the following 58-residue polypeptide: ATP synthase F(0) complex subunit k, mitochondrial (58 aa).

N6-acetyllysine occurs at positions 16 and 17. The chain crosses the membrane as a helical span at residues 23–45 (TLTGRMNCVLATYGGIALLVLYF).

As to quaternary structure, component of the ATP synthase complex composed at least of ATP5F1A/subunit alpha, ATP5F1B/subunit beta, ATP5MC1/subunit c (homooctomer), MT-ATP6/subunit a, MT-ATP8/subunit 8, ATP5ME/subunit e, ATP5MF/subunit f, ATP5MG/subunit g, ATP5MK/subunit k, ATP5MJ/subunit j, ATP5F1C/subunit gamma, ATP5F1D/subunit delta, ATP5F1E/subunit epsilon, ATP5PF/subunit F6, ATP5PB/subunit b, ATP5PD/subunit d, ATP5PO/subunit OSCP. ATP synthase complex consists of a soluble F(1) head domain (subunits alpha(3) and beta(3)) - the catalytic core - and a membrane F(0) domain - the membrane proton channel (subunits c, a, 8, e, f, g, k and j). These two domains are linked by a central stalk (subunits gamma, delta, and epsilon) rotating inside the F1 region and a stationary peripheral stalk (subunits F6, b, d, and OSCP). The ATP synthase complex/complex V exists as a monomeric and a dimeric supercomplex that helps shape mitochondrial cristae to optimize proton flow.

It is found in the mitochondrion membrane. In terms of biological role, subunit k, of the mitochondrial membrane ATP synthase complex (F(1)F(0) ATP synthase or Complex V) that produces ATP from ADP in the presence of a proton gradient across the membrane which is generated by electron transport complexes of the respiratory chain. ATP synthase complex consist of a soluble F(1) head domain - the catalytic core - and a membrane F(1) domain - the membrane proton channel. These two domains are linked by a central stalk rotating inside the F(1) region and a stationary peripheral stalk. During catalysis, ATP synthesis in the catalytic domain of F(1) is coupled via a rotary mechanism of the central stalk subunits to proton translocation. In vivo, can only synthesize ATP although its ATP hydrolase activity can be activated artificially in vitro. Part of the complex F(0) domain. Required for dimerization of the ATP synthase complex and as such regulates ATP synthesis in the mitochondria. The sequence is that of ATP synthase F(0) complex subunit k, mitochondrial from Mus musculus (Mouse).